A 166-amino-acid chain; its full sequence is HTH-type transcriptional regulator PetP (166 aa).

The HTH marR-type domain occupies 17-152 (DEQLRKGIEA…FRQVLEAMMD (136 aa)). The segment at residues 66-89 (VTTLISVLGVTKQSLNRVLRTLID) is a DNA-binding region (H-T-H motif).

Necessary for photosynthetic and respiratory growth. The protein is HTH-type transcriptional regulator PetP (petP) of Rhodobacter capsulatus (strain ATCC BAA-309 / NBRC 16581 / SB1003).